The sequence spans 120 residues: Ribonuclease P protein component 4 (120 aa).

Cys-67, Cys-70, Cys-96, and Cys-99 together coordinate Zn(2+).

The protein belongs to the eukaryotic/archaeal RNase P protein component 4 family. As to quaternary structure, consists of a catalytic RNA component and at least 4-5 protein subunits. It depends on Zn(2+) as a cofactor.

The protein localises to the cytoplasm. The enzyme catalyses Endonucleolytic cleavage of RNA, removing 5'-extranucleotides from tRNA precursor.. Part of ribonuclease P, a protein complex that generates mature tRNA molecules by cleaving their 5'-ends. In Thermococcus sibiricus (strain DSM 12597 / MM 739), this protein is Ribonuclease P protein component 4.